Consider the following 392-residue polypeptide: Queuine tRNA-ribosyltransferase (392 aa).

The active-site Proton acceptor is D93. Residues 93–97, D147, Q189, and G216 contribute to the substrate site; that span reads DSGGY. The tract at residues 247-253 is RNA binding; sequence GVGAPED. D266 serves as the catalytic Nucleophile. The RNA binding; important for wobble base 34 recognition stretch occupies residues 271-275; it reads TRVAR. Residues C304, C306, C309, and H335 each contribute to the Zn(2+) site.

The protein belongs to the queuine tRNA-ribosyltransferase family. In terms of assembly, homodimer. Within each dimer, one monomer is responsible for RNA recognition and catalysis, while the other monomer binds to the replacement base PreQ1. Requires Zn(2+) as cofactor.

The enzyme catalyses 7-aminomethyl-7-carbaguanine + guanosine(34) in tRNA = 7-aminomethyl-7-carbaguanosine(34) in tRNA + guanine. It participates in tRNA modification; tRNA-queuosine biosynthesis. Functionally, catalyzes the base-exchange of a guanine (G) residue with the queuine precursor 7-aminomethyl-7-deazaguanine (PreQ1) at position 34 (anticodon wobble position) in tRNAs with GU(N) anticodons (tRNA-Asp, -Asn, -His and -Tyr). Catalysis occurs through a double-displacement mechanism. The nucleophile active site attacks the C1' of nucleotide 34 to detach the guanine base from the RNA, forming a covalent enzyme-RNA intermediate. The proton acceptor active site deprotonates the incoming PreQ1, allowing a nucleophilic attack on the C1' of the ribose to form the product. After dissociation, two additional enzymatic reactions on the tRNA convert PreQ1 to queuine (Q), resulting in the hypermodified nucleoside queuosine (7-(((4,5-cis-dihydroxy-2-cyclopenten-1-yl)amino)methyl)-7-deazaguanosine). The polypeptide is Queuine tRNA-ribosyltransferase (Dehalococcoides mccartyi (strain ATCC BAA-2266 / KCTC 15142 / 195) (Dehalococcoides ethenogenes (strain 195))).